Here is a 245-residue protein sequence, read N- to C-terminus: Large ribosomal subunit protein uL3 (245 aa).

Q151 is modified (N5-methylglutamine). Positions 214 to 245 (KDAPQPGKYRLANSAAPQPAEADAASDTGAQA) are disordered. The span at 225–245 (ANSAAPQPAEADAASDTGAQA) shows a compositional bias: low complexity.

It belongs to the universal ribosomal protein uL3 family. As to quaternary structure, part of the 50S ribosomal subunit. Forms a cluster with proteins L14 and L19. In terms of processing, methylated by PrmB.

One of the primary rRNA binding proteins, it binds directly near the 3'-end of the 23S rRNA, where it nucleates assembly of the 50S subunit. This Methylocella silvestris (strain DSM 15510 / CIP 108128 / LMG 27833 / NCIMB 13906 / BL2) protein is Large ribosomal subunit protein uL3.